We begin with the raw amino-acid sequence, 425 residues long: Tyrosine--tRNA ligase (425 aa).

Tyrosine 37 serves as a coordination point for L-tyrosine. Positions 42 to 51 match the 'HIGH' region motif; it reads PTADSLHLGH. L-tyrosine contacts are provided by tyrosine 175 and glutamine 179. The 'KMSKS' region signature appears at 235-239; the sequence is KFGKT. Lysine 238 provides a ligand contact to ATP. In terms of domain architecture, S4 RNA-binding spans 357 to 414; the sequence is ADLQQALVSAELVPSRGQARTMISSNAVTINGEKQADPEYTFSASDRLFDRYTLLRRG.

Belongs to the class-I aminoacyl-tRNA synthetase family. TyrS type 1 subfamily. As to quaternary structure, homodimer.

The protein localises to the cytoplasm. The enzyme catalyses tRNA(Tyr) + L-tyrosine + ATP = L-tyrosyl-tRNA(Tyr) + AMP + diphosphate + H(+). Its function is as follows. Catalyzes the attachment of tyrosine to tRNA(Tyr) in a two-step reaction: tyrosine is first activated by ATP to form Tyr-AMP and then transferred to the acceptor end of tRNA(Tyr). The protein is Tyrosine--tRNA ligase of Pectobacterium carotovorum subsp. carotovorum (strain PC1).